Reading from the N-terminus, the 137-residue chain is Putative pre-16S rRNA nuclease (137 aa).

The protein belongs to the YqgF nuclease family.

The protein localises to the cytoplasm. In terms of biological role, could be a nuclease involved in processing of the 5'-end of pre-16S rRNA. This is Putative pre-16S rRNA nuclease from Clostridium botulinum (strain 657 / Type Ba4).